Here is a 384-residue protein sequence, read N- to C-terminus: Prokineticin receptor 2 (384 aa).

Residues 1-54 are Extracellular-facing; that stretch reads MAAQNGNTSFTPNFNPPQDHASSLSFNFSYGDYDLPMDEDEDMTKTRTFFAAKI. Residues Asn-7 and Asn-27 are each glycosylated (N-linked (GlcNAc...) asparagine). The helical transmembrane segment at 55–75 threads the bilayer; that stretch reads VIGIALAGIMLVCGIGNFVFI. At 76–89 the chain is on the cytoplasmic side; it reads AALTRYKKLRNLTN. A helical membrane pass occupies residues 90–110; that stretch reads LLIANLAISDFLVAIICCPFE. Over 111–136 the chain is Extracellular; it reads MDYYVVRQLSWEHGHVLCASVNYLRT. The cysteines at positions 128 and 208 are disulfide-linked. Residues 137–157 traverse the membrane as a helical segment; that stretch reads VSLYVSTNALLAIAIDRYLAI. Residues 158–171 lie on the Cytoplasmic side of the membrane; it reads VHPLKPRMNYQTAS. Residues 172-192 form a helical membrane-spanning segment; sequence FLIALVWMVSILIAIPSAYFA. Residues 193–223 are Extracellular-facing; it reads TETVLFIVKSQEKIFCGQIWPVDQQLYYKSY. Residues 224–244 form a helical membrane-spanning segment; the sequence is FLFIFGVEFVGPVVTMTLCYA. At 245-273 the chain is on the cytoplasmic side; that stretch reads RISRELWFKAVPGFQTEQIRKRLRCRRKT. Residues 274–294 form a helical membrane-spanning segment; that stretch reads VLVLMCILTAYVLCWAPFYGF. The Extracellular segment spans residues 295 to 313; it reads TIVRDFFPTVFVKEKHYLT. Residues 314 to 334 form a helical membrane-spanning segment; the sequence is AFYVVECIAMSNSMINTVCFV. The Cytoplasmic portion of the chain corresponds to 335-384; it reads TVKNNTMKYFKKMMLLHWRPSQRGSKSSADLDLRTNGVPTTEEVDCIRLK.

It belongs to the G-protein coupled receptor 1 family. As to quaternary structure, homodimer. As to expression, expressed in the ileocecum, thyroid gland, pituitary gland, salivary gland, adrenal gland, testis, ovary and brain.

The protein localises to the cell membrane. In terms of biological role, receptor for prokineticin 2. Exclusively coupled to the G(q) subclass of heteromeric G proteins. Activation leads to mobilization of calcium, stimulation of phosphoinositide turnover and activation of p44/p42 mitogen-activated protein kinase. The protein is Prokineticin receptor 2 (PROKR2) of Homo sapiens (Human).